Reading from the N-terminus, the 85-residue chain is Small ribosomal subunit protein bS20 (85 aa).

This sequence belongs to the bacterial ribosomal protein bS20 family.

Its function is as follows. Binds directly to 16S ribosomal RNA. The polypeptide is Small ribosomal subunit protein bS20 (Lactobacillus johnsonii (strain CNCM I-12250 / La1 / NCC 533)).